A 201-amino-acid polypeptide reads, in one-letter code: Imidazole glycerol phosphate synthase subunit HisH (201 aa).

A Glutamine amidotransferase type-1 domain is found at 1–201 (MIIVIDYDAG…ILKKFVDLCD (201 aa)). C79 (nucleophile) is an active-site residue. Catalysis depends on residues H181 and E183.

In terms of assembly, heterodimer of HisH and HisF.

Its subcellular location is the cytoplasm. It carries out the reaction 5-[(5-phospho-1-deoxy-D-ribulos-1-ylimino)methylamino]-1-(5-phospho-beta-D-ribosyl)imidazole-4-carboxamide + L-glutamine = D-erythro-1-(imidazol-4-yl)glycerol 3-phosphate + 5-amino-1-(5-phospho-beta-D-ribosyl)imidazole-4-carboxamide + L-glutamate + H(+). The enzyme catalyses L-glutamine + H2O = L-glutamate + NH4(+). The protein operates within amino-acid biosynthesis; L-histidine biosynthesis; L-histidine from 5-phospho-alpha-D-ribose 1-diphosphate: step 5/9. Functionally, IGPS catalyzes the conversion of PRFAR and glutamine to IGP, AICAR and glutamate. The HisH subunit catalyzes the hydrolysis of glutamine to glutamate and ammonia as part of the synthesis of IGP and AICAR. The resulting ammonia molecule is channeled to the active site of HisF. In Streptococcus mutans serotype c (strain ATCC 700610 / UA159), this protein is Imidazole glycerol phosphate synthase subunit HisH.